We begin with the raw amino-acid sequence, 485 residues long: Delta(14)-sterol reductase (485 aa).

5 helical membrane passes run F18 to F38, G77 to L97, L131 to I151, F155 to V175, and S319 to F339. NADP(+) contacts are provided by residues K346, R350, L373, W378, and N385–Y386. Residues A431–I451 traverse the membrane as a helical segment. NADP(+)-binding positions include D457, C461 to Y465, and Y472.

This sequence belongs to the ERG4/ERG24 family.

The protein localises to the membrane. The catalysed reaction is 4,4-dimethyl-5alpha-cholesta-8,24-dien-3beta-ol + NADP(+) = 4,4-dimethyl-5alpha-cholesta-8,14,24-trien-3beta-ol + NADPH + H(+). It participates in steroid biosynthesis; zymosterol biosynthesis; zymosterol from lanosterol: step 2/6. Functionally, reduces the C14=C15 double bond of 4,4-dimethyl-cholesta-8,14,24-trienol to produce 4,4-dimethyl-cholesta-8,24-dienol. This is Delta(14)-sterol reductase from Fusarium vanettenii (Neocosmospora pisi).